The sequence spans 89 residues: Small ribosomal subunit protein uS15 (89 aa).

The protein belongs to the universal ribosomal protein uS15 family. In terms of assembly, part of the 30S ribosomal subunit. Forms a bridge to the 50S subunit in the 70S ribosome, contacting the 23S rRNA.

Its function is as follows. One of the primary rRNA binding proteins, it binds directly to 16S rRNA where it helps nucleate assembly of the platform of the 30S subunit by binding and bridging several RNA helices of the 16S rRNA. Forms an intersubunit bridge (bridge B4) with the 23S rRNA of the 50S subunit in the ribosome. The chain is Small ribosomal subunit protein uS15 from Staphylococcus epidermidis (strain ATCC 12228 / FDA PCI 1200).